The following is a 176-amino-acid chain: ADP-ribosylation factor-like protein 8d (176 aa).

GTP-binding positions include 21-26 (NSGKTS), 40-43 (MIPT), 62-66 (DLGGQ), and 121-124 (NKID).

This sequence belongs to the small GTPase superfamily. Arf family. In terms of assembly, interacts with tubulin.

The protein resides in the late endosome membrane. Its subcellular location is the lysosome membrane. It localises to the cytoplasm. It is found in the cytoskeleton. The protein localises to the spindle. In terms of biological role, may play a role in lysosome motility. May play a role in chromosome segregation. This is ADP-ribosylation factor-like protein 8d from Arabidopsis thaliana (Mouse-ear cress).